We begin with the raw amino-acid sequence, 317 residues long: Transaldolase (317 aa).

Residue lysine 126 is the Schiff-base intermediate with substrate of the active site.

The protein belongs to the transaldolase family. Type 1 subfamily. In terms of assembly, homodimer.

The protein resides in the cytoplasm. The enzyme catalyses D-sedoheptulose 7-phosphate + D-glyceraldehyde 3-phosphate = D-erythrose 4-phosphate + beta-D-fructose 6-phosphate. It participates in carbohydrate degradation; pentose phosphate pathway; D-glyceraldehyde 3-phosphate and beta-D-fructose 6-phosphate from D-ribose 5-phosphate and D-xylulose 5-phosphate (non-oxidative stage): step 2/3. Its function is as follows. Transaldolase is important for the balance of metabolites in the pentose-phosphate pathway. The chain is Transaldolase from Burkholderia pseudomallei (strain 1710b).